The chain runs to 313 residues: Ribosomal RNA small subunit methyltransferase H (313 aa).

S-adenosyl-L-methionine contacts are provided by residues 35–37 (GGH), Asp55, Phe79, Asp101, and Gln108.

The protein belongs to the methyltransferase superfamily. RsmH family.

Its subcellular location is the cytoplasm. It catalyses the reaction cytidine(1402) in 16S rRNA + S-adenosyl-L-methionine = N(4)-methylcytidine(1402) in 16S rRNA + S-adenosyl-L-homocysteine + H(+). Functionally, specifically methylates the N4 position of cytidine in position 1402 (C1402) of 16S rRNA. This Escherichia coli O7:K1 (strain IAI39 / ExPEC) protein is Ribosomal RNA small subunit methyltransferase H.